The chain runs to 419 residues: 4-hydroxyphenylpyruvate dioxygenase (419 aa).

VOC domains are found at residues 37 to 185 and 216 to 376; these read GYDH…LLSR and RIDH…LFTR. Fe cation is bound by residues His219, His302, and Glu387.

It belongs to the 4HPPD family. The cofactor is Fe cation.

The enzyme catalyses 3-(4-hydroxyphenyl)pyruvate + O2 = homogentisate + CO2. It participates in amino-acid degradation; L-phenylalanine degradation; acetoacetate and fumarate from L-phenylalanine: step 3/6. This is 4-hydroxyphenylpyruvate dioxygenase (HPD4) from Pyricularia oryzae (strain 70-15 / ATCC MYA-4617 / FGSC 8958) (Rice blast fungus).